The primary structure comprises 92 residues: Phosphoribosyl-ATP pyrophosphatase (92 aa).

It belongs to the PRA-PH family.

It is found in the cytoplasm. It carries out the reaction 1-(5-phospho-beta-D-ribosyl)-ATP + H2O = 1-(5-phospho-beta-D-ribosyl)-5'-AMP + diphosphate + H(+). It participates in amino-acid biosynthesis; L-histidine biosynthesis; L-histidine from 5-phospho-alpha-D-ribose 1-diphosphate: step 2/9. This chain is Phosphoribosyl-ATP pyrophosphatase, found in Leptospira interrogans serogroup Icterohaemorrhagiae serovar copenhageni (strain Fiocruz L1-130).